A 171-amino-acid chain; its full sequence is uncharacterized protein (171 aa).

The first 17 residues, 1–17 (MLKRIIWILFLLGLTWG), serve as a signal peptide directing secretion.

Part of the elfADCG-ycbUVF fimbrial operon, which promotes adhesion of bacteria to different abiotic surfaces. This is an uncharacterized protein from Escherichia coli (strain K12).